We begin with the raw amino-acid sequence, 323 residues long: Methenyltetrahydromethanopterin cyclohydrolase (323 aa).

The protein belongs to the MCH family.

It is found in the cytoplasm. It catalyses the reaction 5,10-methenyl-5,6,7,8-tetrahydromethanopterin + H2O = N(5)-formyl-5,6,7,8-tetrahydromethanopterin + H(+). The protein operates within one-carbon metabolism; methanogenesis from CO(2); 5,10-methenyl-5,6,7,8-tetrahydromethanopterin from CO(2): step 3/3. Catalyzes the reversible interconversion of 5-formyl-H(4)MPT to methenyl-H(4)MPT(+). The polypeptide is Methenyltetrahydromethanopterin cyclohydrolase (Methanococcus vannielii (strain ATCC 35089 / DSM 1224 / JCM 13029 / OCM 148 / SB)).